Reading from the N-terminus, the 137-residue chain is NADPH-dependent 7-cyano-7-deazaguanine reductase (137 aa).

C51 (thioimide intermediate) is an active-site residue. Catalysis depends on D58, which acts as the Proton donor. Substrate contacts are provided by residues 73-75 (VEL) and 92-93 (HE).

It belongs to the GTP cyclohydrolase I family. QueF type 1 subfamily.

The protein resides in the cytoplasm. The enzyme catalyses 7-aminomethyl-7-carbaguanine + 2 NADP(+) = 7-cyano-7-deazaguanine + 2 NADPH + 3 H(+). The protein operates within tRNA modification; tRNA-queuosine biosynthesis. Functionally, catalyzes the NADPH-dependent reduction of 7-cyano-7-deazaguanine (preQ0) to 7-aminomethyl-7-deazaguanine (preQ1). This is NADPH-dependent 7-cyano-7-deazaguanine reductase from Gloeobacter violaceus (strain ATCC 29082 / PCC 7421).